Consider the following 470-residue polypeptide: Glutamate--tRNA ligase 1 (470 aa).

The 'HIGH' region motif lies at 15 to 25 (PSPTGTMHIGT). A 'KMSKS' region motif is present at residues 241–245 (KLSKR). Lys-244 contacts ATP.

This sequence belongs to the class-I aminoacyl-tRNA synthetase family. Glutamate--tRNA ligase type 1 subfamily. Monomer.

The protein localises to the cytoplasm. The enzyme catalyses tRNA(Glu) + L-glutamate + ATP = L-glutamyl-tRNA(Glu) + AMP + diphosphate. Functionally, catalyzes the attachment of glutamate to tRNA(Glu) in a two-step reaction: glutamate is first activated by ATP to form Glu-AMP and then transferred to the acceptor end of tRNA(Glu). This is Glutamate--tRNA ligase 1 from Jannaschia sp. (strain CCS1).